We begin with the raw amino-acid sequence, 112 residues long: Large ribosomal subunit protein uL22 (112 aa).

This sequence belongs to the universal ribosomal protein uL22 family. In terms of assembly, part of the 50S ribosomal subunit.

Its function is as follows. This protein binds specifically to 23S rRNA; its binding is stimulated by other ribosomal proteins, e.g. L4, L17, and L20. It is important during the early stages of 50S assembly. It makes multiple contacts with different domains of the 23S rRNA in the assembled 50S subunit and ribosome. Functionally, the globular domain of the protein is located near the polypeptide exit tunnel on the outside of the subunit, while an extended beta-hairpin is found that lines the wall of the exit tunnel in the center of the 70S ribosome. The chain is Large ribosomal subunit protein uL22 from Mesoplasma florum (strain ATCC 33453 / NBRC 100688 / NCTC 11704 / L1) (Acholeplasma florum).